The sequence spans 86 residues: Kappa-theraphotoxin-Cg1a 4 (86 aa).

Positions 1–21 (MKASVLITLAVLGVMFVWASA) are cleaved as a signal peptide. Positions 22–50 (AELEERGSDQRDSPAWLKSMERIFQSEER) are excised as a propeptide. 3 disulfides stabilise this stretch: cysteine 52-cysteine 66, cysteine 59-cysteine 71, and cysteine 65-cysteine 78. Phenylalanine 84 carries the post-translational modification Phenylalanine amide.

This sequence belongs to the neurotoxin 10 (Hwtx-1) family. 28 (Jztx-11) subfamily. Expressed by the venom gland.

The protein localises to the secreted. This toxin acts as a voltage-dependent gating-modifier. It inhibits the sodium conductance (IC(50)=124 nM) and slows the fast inactivation (EC(50)=1180 nM) of Nav1.5/SCN5A. It significantly shifts the activation to more depolarized voltages and decreases the deactivation of Nav1.5 currents upon extreme depolarization, but only slightly affects voltage-dependence of steady-state inactivation. In addition, this toxin causes an approximately five-fold decrease in the rate of recovery from inactivation and an approximately 1.9-fold reduction in the closed-state inactivation rate. This toxin integrates the functions of site 3 toxins (alpha-scorpion toxins) with site 4 toxins (beta-scorpion and spider toxins) by targeting multiple sites on Nav1.5. Also shows inhibition of voltage-gated potassium channels (5 uM completely inhibits Kv2.1/KCNB1, whereas 5 uM moderately inhibits Kv4.2/KCND2 Kv4.1/KCND1 channels). In Chilobrachys guangxiensis (Chinese earth tiger tarantula), this protein is Kappa-theraphotoxin-Cg1a 4.